We begin with the raw amino-acid sequence, 1099 residues long: Zinc finger protein basonuclin-2 (1099 aa).

The disordered stretch occupies residues 45–66; the sequence is EEAEVDVRERETQRDREPKRAR. A compositionally biased stretch (basic and acidic residues) spans 49 to 66; that stretch reads VDVRERETQRDREPKRAR. A Glycyl lysine isopeptide (Lys-Gly) (interchain with G-Cter in SUMO2) cross-link involves residue lysine 277. The tract at residues 357–385 is disordered; sequence LSTQNEYNESSESEVSPTPYKNDQTPNRN. The span at 361 to 372 shows a compositional bias: low complexity; the sequence is NEYNESSESEVS. Residues 375–385 show a composition bias toward polar residues; it reads PYKNDQTPNRN. Residues lysine 396, lysine 416, and lysine 421 each participate in a glycyl lysine isopeptide (Lys-Gly) (interchain with G-Cter in SUMO2) cross-link. The disordered stretch occupies residues 397–423; that stretch reads TEPACVSPIQNSAPVSDLTKTEHPKSS. Residues 441 to 464 form a C2H2-type 1 zinc finger; sequence VFCNACGKTFYDKGTLKIHYNAVH. Residue serine 561 is modified to Phosphoserine. Disordered regions lie at residues 622-641 and 648-742; these read EPSA…MPVK and DTAD…EGDE. Lysine 641 is covalently cross-linked (Glycyl lysine isopeptide (Lys-Gly) (interchain with G-Cter in SUMO2)). Residues 648–661 are compositionally biased toward acidic residues; that stretch reads DTADEFDDEDDDPN. Composition is skewed to basic and acidic residues over residues 670 to 680 and 719 to 742; these read MSHDNHCHSQE and ERDY…EGDE. The C2H2-type 2 zinc-finger motif lies at 833–856; sequence KICYVCKKSFKSSYSVKLHYRNVH. Glycyl lysine isopeptide (Lys-Gly) (interchain with G-Cter in SUMO2) cross-links involve residues lysine 894 and lysine 919. Disordered stretches follow at residues 929 to 948 and 968 to 1008; these read LDVR…HLNG and LQSS…KAEA. The segment covering 982-995 has biased composition (acidic residues); the sequence is AGSDEGILLDDIDG. 2 C2H2-type zinc fingers span residues 1035–1058 and 1063–1090; these read IMCN…KTVH and HKCK…PNLH. The segment at 1079 to 1099 is disordered; it reads SRNRHSQNPNLHKNIPFTSVD.

As to expression, highly expressed in testis, uterus and small intestine, and weakly expressed in colon and prostate. Also expressed in skin, primary keratinocytes, immortalized keratinocytes, and HeLa and HEK293 cells. Not detected in blood, thymus, spleen or Hep-G2 cells.

The protein resides in the nucleus. Functionally, probable transcription factor specific for skin keratinocytes. May play a role in the differentiation of spermatozoa and oocytes. May also play an important role in early urinary-tract development. The polypeptide is Zinc finger protein basonuclin-2 (Homo sapiens (Human)).